Here is a 100-residue protein sequence, read N- to C-terminus: NADH-quinone oxidoreductase subunit K (100 aa).

Helical transmembrane passes span isoleucine 2–isoleucine 22, isoleucine 29–isoleucine 49, and isoleucine 60–leucine 80.

This sequence belongs to the complex I subunit 4L family. NDH-1 is composed of 14 different subunits. Subunits NuoA, H, J, K, L, M, N constitute the membrane sector of the complex.

The protein resides in the cell inner membrane. It catalyses the reaction a quinone + NADH + 5 H(+)(in) = a quinol + NAD(+) + 4 H(+)(out). Functionally, NDH-1 shuttles electrons from NADH, via FMN and iron-sulfur (Fe-S) centers, to quinones in the respiratory chain. The immediate electron acceptor for the enzyme in this species is believed to be ubiquinone. Couples the redox reaction to proton translocation (for every two electrons transferred, four hydrogen ions are translocated across the cytoplasmic membrane), and thus conserves the redox energy in a proton gradient. This Campylobacter concisus (strain 13826) protein is NADH-quinone oxidoreductase subunit K.